Consider the following 144-residue polypeptide: Large ribosomal subunit protein uL22 (144 aa).

The segment at 123–144 (ELVKKRTMGHKKEKAKQKQKQQ) is disordered. Residues 125 to 144 (VKKRTMGHKKEKAKQKQKQQ) are compositionally biased toward basic residues.

It belongs to the universal ribosomal protein uL22 family. As to quaternary structure, part of the 50S ribosomal subunit.

In terms of biological role, this protein binds specifically to 23S rRNA; its binding is stimulated by other ribosomal proteins, e.g. L4, L17, and L20. It is important during the early stages of 50S assembly. It makes multiple contacts with different domains of the 23S rRNA in the assembled 50S subunit and ribosome. Functionally, the globular domain of the protein is located near the polypeptide exit tunnel on the outside of the subunit, while an extended beta-hairpin is found that lines the wall of the exit tunnel in the center of the 70S ribosome. This chain is Large ribosomal subunit protein uL22, found in Mycoplasma genitalium (strain ATCC 33530 / DSM 19775 / NCTC 10195 / G37) (Mycoplasmoides genitalium).